Reading from the N-terminus, the 247-residue chain is 5'-nucleotidase SurE (247 aa).

4 residues coordinate a divalent metal cation: Asp8, Asp9, Ser39, and Asn91.

Belongs to the SurE nucleotidase family. A divalent metal cation serves as cofactor.

The protein resides in the cytoplasm. The catalysed reaction is a ribonucleoside 5'-phosphate + H2O = a ribonucleoside + phosphate. Its function is as follows. Nucleotidase that shows phosphatase activity on nucleoside 5'-monophosphates. The chain is 5'-nucleotidase SurE from Pelobacter propionicus (strain DSM 2379 / NBRC 103807 / OttBd1).